The primary structure comprises 260 residues: Pyridoxine 5'-phosphate synthase (260 aa).

Asn15 contacts 3-amino-2-oxopropyl phosphate. 17 to 18 (DH) provides a ligand contact to 1-deoxy-D-xylulose 5-phosphate. Position 26 (Arg26) interacts with 3-amino-2-oxopropyl phosphate. Residue His51 is the Proton acceptor of the active site. Residues Arg53 and His58 each coordinate 1-deoxy-D-xylulose 5-phosphate. Residue Glu78 is the Proton acceptor of the active site. Thr108 serves as a coordination point for 1-deoxy-D-xylulose 5-phosphate. His199 serves as the catalytic Proton donor. 3-amino-2-oxopropyl phosphate contacts are provided by residues Gly200 and 221–222 (GH).

This sequence belongs to the PNP synthase family. In terms of assembly, homooctamer; tetramer of dimers.

Its subcellular location is the cytoplasm. The enzyme catalyses 3-amino-2-oxopropyl phosphate + 1-deoxy-D-xylulose 5-phosphate = pyridoxine 5'-phosphate + phosphate + 2 H2O + H(+). Its pathway is cofactor biosynthesis; pyridoxine 5'-phosphate biosynthesis; pyridoxine 5'-phosphate from D-erythrose 4-phosphate: step 5/5. Its function is as follows. Catalyzes the complicated ring closure reaction between the two acyclic compounds 1-deoxy-D-xylulose-5-phosphate (DXP) and 3-amino-2-oxopropyl phosphate (1-amino-acetone-3-phosphate or AAP) to form pyridoxine 5'-phosphate (PNP) and inorganic phosphate. The protein is Pyridoxine 5'-phosphate synthase of Cupriavidus pinatubonensis (strain JMP 134 / LMG 1197) (Cupriavidus necator (strain JMP 134)).